The following is a 172-amino-acid chain: Putative phosphoesterase Bcer98_0945 (172 aa).

H34 (proton donor) is an active-site residue. 2 consecutive short sequence motifs (HXTX) follow at residues 34 to 37 and 115 to 118; these read HITL and HLTI. The Proton acceptor role is filled by H115.

It belongs to the 2H phosphoesterase superfamily. YjcG family.

In Bacillus cytotoxicus (strain DSM 22905 / CIP 110041 / 391-98 / NVH 391-98), this protein is Putative phosphoesterase Bcer98_0945.